The sequence spans 399 residues: Chaperone protein DnaJ 1 (399 aa).

The region spanning 10–75 (DYYKVLGVPK…KKRKEYDEAR (66 aa)) is the J domain. The segment at 166 to 244 (GATVPLRMSS…CKGSGRAKSS (79 aa)) adopts a CR-type zinc-finger fold. Residues C179, C182, C195, C198, C218, C221, C232, and C235 each contribute to the Zn(2+) site. 4 CXXCXGXG motif repeats span residues 179–186 (CKACSGTG), 195–202 (CPTCVGTG), 218–225 (CPDCKGRG), and 232–239 (CEVCKGSG).

The protein belongs to the DnaJ family. As to quaternary structure, homodimer. Requires Zn(2+) as cofactor.

It is found in the cytoplasm. Its function is as follows. Participates actively in the response to hyperosmotic and heat shock by preventing the aggregation of stress-denatured proteins and by disaggregating proteins, also in an autonomous, DnaK-independent fashion. Unfolded proteins bind initially to DnaJ; upon interaction with the DnaJ-bound protein, DnaK hydrolyzes its bound ATP, resulting in the formation of a stable complex. GrpE releases ADP from DnaK; ATP binding to DnaK triggers the release of the substrate protein, thus completing the reaction cycle. Several rounds of ATP-dependent interactions between DnaJ, DnaK and GrpE are required for fully efficient folding. Also involved, together with DnaK and GrpE, in the DNA replication of plasmids through activation of initiation proteins. The protein is Chaperone protein DnaJ 1 of Streptomyces coelicolor (strain ATCC BAA-471 / A3(2) / M145).